A 227-amino-acid chain; its full sequence is Uracil phosphoribosyltransferase (227 aa).

A GTP-binding site is contributed by 36-40; it reads KGLVK. 5-phospho-alpha-D-ribose 1-diphosphate is bound by residues Arg-86, Arg-111, and 145–153; that span reads DPMLATGST. Uracil is bound by residues Ile-212 and 217-219; that span reads GDA. Position 218 (Asp-218) interacts with 5-phospho-alpha-D-ribose 1-diphosphate.

Belongs to the UPRTase family. Requires Mg(2+) as cofactor.

The enzyme catalyses UMP + diphosphate = 5-phospho-alpha-D-ribose 1-diphosphate + uracil. Its pathway is pyrimidine metabolism; UMP biosynthesis via salvage pathway; UMP from uracil: step 1/1. Its activity is regulated as follows. Allosterically activated by GTP. Catalyzes the conversion of uracil and 5-phospho-alpha-D-ribose 1-diphosphate (PRPP) to UMP and diphosphate. The protein is Uracil phosphoribosyltransferase of Halobacterium salinarum (strain ATCC 700922 / JCM 11081 / NRC-1) (Halobacterium halobium).